Consider the following 125-residue polypeptide: Glycine cleavage system H protein (125 aa).

The 83-residue stretch at V23–R105 folds into the Lipoyl-binding domain. K64 carries the N6-lipoyllysine modification.

The protein belongs to the GcvH family. The glycine cleavage system is composed of four proteins: P, T, L and H. It depends on (R)-lipoate as a cofactor.

Functionally, the glycine cleavage system catalyzes the degradation of glycine. The H protein shuttles the methylamine group of glycine from the P protein to the T protein. The sequence is that of Glycine cleavage system H protein from Streptomyces avermitilis (strain ATCC 31267 / DSM 46492 / JCM 5070 / NBRC 14893 / NCIMB 12804 / NRRL 8165 / MA-4680).